We begin with the raw amino-acid sequence, 248 residues long: 1-(5-phosphoribosyl)-5-[(5-phosphoribosylamino)methylideneamino] imidazole-4-carboxamide isomerase (248 aa).

Aspartate 17 serves as the catalytic Proton acceptor. Aspartate 136 (proton donor) is an active-site residue.

Belongs to the HisA/HisF family.

The protein resides in the cytoplasm. The enzyme catalyses 1-(5-phospho-beta-D-ribosyl)-5-[(5-phospho-beta-D-ribosylamino)methylideneamino]imidazole-4-carboxamide = 5-[(5-phospho-1-deoxy-D-ribulos-1-ylimino)methylamino]-1-(5-phospho-beta-D-ribosyl)imidazole-4-carboxamide. Its pathway is amino-acid biosynthesis; L-histidine biosynthesis; L-histidine from 5-phospho-alpha-D-ribose 1-diphosphate: step 4/9. This is 1-(5-phosphoribosyl)-5-[(5-phosphoribosylamino)methylideneamino] imidazole-4-carboxamide isomerase from Arthrobacter sp. (strain FB24).